The sequence spans 340 residues: Guanine nucleotide-binding protein G(I)/G(S)/G(T) subunit beta-3 (340 aa).

WD repeat units lie at residues glycine 53 to aspartate 83, leucine 95 to asparagine 125, alanine 141 to aspartate 170, glycine 182 to aspartate 212, glycine 224 to aspartate 254, serine 268 to aspartate 298, and glycine 310 to asparagine 340.

This sequence belongs to the WD repeat G protein beta family. G proteins are composed of 3 units, alpha, beta and gamma. Interacts with RASD2.

In terms of biological role, guanine nucleotide-binding proteins (G proteins) are involved as a modulator or transducer in various transmembrane signaling systems. The beta and gamma chains are required for the GTPase activity, for replacement of GDP by GTP, and for G protein-effector interaction. The polypeptide is Guanine nucleotide-binding protein G(I)/G(S)/G(T) subunit beta-3 (Gnb3) (Mus musculus (Mouse)).